The following is a 198-amino-acid chain: MICOS complex subunit Mic26 (198 aa).

The N-terminal stretch at 1 to 23 is a signal peptide; the sequence is MFKVIQRSVGPASLSLLTFRVYA. N-linked (GlcNAc...) asparagine glycosylation occurs at asparagine 63. The helical transmembrane segment at 108–128 threads the bilayer; the sequence is PGFFPRLGVIGFAGFVGLLFA.

This sequence belongs to the apolipoprotein O/MICOS complex subunit Mic27 family. In terms of assembly, component of the mitochondrial contact site and cristae organizing system (MICOS) complex, composed of at least MICOS10/MIC10, CHCHD3/MIC19, CHCHD6/MIC25, APOOL/MIC27, IMMT/MIC60, APOO/MIC23/MIC26 and MICOS13/MIC13. This complex was also known under the names MINOS or MitOS complex. The MICOS complex associates with mitochondrial outer membrane proteins SAMM50, MTX1 and MTX2 (together described as components of the mitochondrial outer membrane sorting assembly machinery (SAM) complex) and DNAJC11, mitochondrial inner membrane protein TMEM11 and with HSPA9. The MICOS and SAM complexes together with DNAJC11 are part of a large protein complex spanning both membranes termed the mitochondrial intermembrane space bridging (MIB) complex. Interacts with IMMT/MIC60. Interacts with MICOS10/MIC10 and APOOL/MIC27.

The protein resides in the mitochondrion inner membrane. The protein localises to the mitochondrion. It is found in the endoplasmic reticulum membrane. It localises to the golgi apparatus membrane. Component of the MICOS complex, a large protein complex of the mitochondrial inner membrane that plays crucial roles in the maintenance of crista junctions, inner membrane architecture, and formation of contact sites to the outer membrane. Plays a crucial role in crista junction formation and mitochondrial function. Can induce cardiac lipotoxicity by enhancing mitochondrial respiration and fatty acid metabolism in cardiac myoblasts. Promotes cholesterol efflux from macrophage cells. Detected in HDL, LDL and VLDL. Secreted by a microsomal triglyceride transfer protein (MTTP)-dependent mechanism, probably as a VLDL-associated protein that is subsequently transferred to HDL. The protein is MICOS complex subunit Mic26 (Apoo) of Mus musculus (Mouse).